The following is a 277-amino-acid chain: Myelin proteolipid protein (277 aa).

Topologically, residues 1 to 10 (MGLLECCARC) are cytoplasmic. S-palmitoyl cysteine attachment occurs at residues cysteine 6, cysteine 7, and cysteine 10. The helical transmembrane segment at 11 to 36 (LVGAPFASLVATGLCFFGVALFCGCG) threads the bilayer. Topologically, residues 37–59 (HEALTGTEKLIETYFSKNYQDYE) are extracellular. A helical transmembrane segment spans residues 60-88 (YLINVIHAFQYVIYGTASFFFLYGALLLA). At 89–151 (EGFYTTGAVR…LGKWLGHPDK (63 aa)) the chain is on the cytoplasmic side. Residue cysteine 109 is the site of S-palmitoyl cysteine attachment. Serine 114 carries the phosphoserine modification. Phosphothreonine occurs at positions 116 and 118. Cysteine 141 is lipidated: S-palmitoyl cysteine. Residues 152-178 (FVGITYALTVVWLLVFACSAVPVYIYF) form a helical membrane-spanning segment. Over 179–238 (NTWTTCQSIAFPSKTSASIGSLCADARMYGVLPWNAFPGKVCGSNLLSICKTAEFQMTFH) the chain is Extracellular. 2 disulfides stabilise this stretch: cysteine 184/cysteine 228 and cysteine 201/cysteine 220. Serine 199 carries the O-palmitoyl serine lipid modification. A helical transmembrane segment spans residues 239 to 268 (LFIAAFVGAAATLISLLTFMIAATYNFAVL). Residues 269-277 (KLMGRGTKF) are Cytoplasmic-facing.

Belongs to the myelin proteolipid protein family.

It is found in the cell membrane. The protein localises to the myelin membrane. In terms of biological role, this is the major myelin protein from the central nervous system. It plays an important role in the formation or maintenance of the multilamellar structure of myelin. This is Myelin proteolipid protein (PLP1) from Macaca fascicularis (Crab-eating macaque).